The primary structure comprises 156 residues: Large ribosomal subunit protein uL30 (156 aa).

This sequence belongs to the universal ribosomal protein uL30 family. Part of the 50S ribosomal subunit.

The protein is Large ribosomal subunit protein uL30 of Sulfolobus acidocaldarius (strain ATCC 33909 / DSM 639 / JCM 8929 / NBRC 15157 / NCIMB 11770).